The following is a 230-amino-acid chain: Lactate utilization protein C (230 aa).

Belongs to the LutC/YkgG family.

Functionally, is involved in L-lactate degradation and allows cells to grow with lactate as the sole carbon source. This Exiguobacterium sp. (strain ATCC BAA-1283 / AT1b) protein is Lactate utilization protein C.